Consider the following 335-residue polypeptide: Nod factor export ATP-binding protein I (335 aa).

In terms of domain architecture, ABC transporter spans 37-267 (IDVASVTKSY…KIGCQVIEIY (231 aa)). 69–76 (GPNGAGKS) is an ATP binding site.

This sequence belongs to the ABC transporter superfamily. Lipooligosaccharide exporter (TC 3.A.1.102) family. The complex is composed of two ATP-binding proteins (NodI) and two transmembrane proteins (NodJ).

It localises to the cell inner membrane. Its function is as follows. Part of the ABC transporter complex NodIJ involved in the export of the nodulation factors (Nod factors), the bacterial signal molecules that induce symbiosis and subsequent nodulation induction. Nod factors are LCO (lipo-chitin oligosaccharide), a modified beta-1,4-linked N-acetylglucosamine oligosaccharide. This subunit is responsible for energy coupling to the transport system. This chain is Nod factor export ATP-binding protein I, found in Rhizobium meliloti (strain 1021) (Ensifer meliloti).